The primary structure comprises 294 residues: Probable 2-(5''-triphosphoribosyl)-3'-dephosphocoenzyme-A synthase (294 aa).

The protein belongs to the CitG/MdcB family.

The enzyme catalyses 3'-dephospho-CoA + ATP = 2'-(5''-triphospho-alpha-D-ribosyl)-3'-dephospho-CoA + adenine. This is Probable 2-(5''-triphosphoribosyl)-3'-dephosphocoenzyme-A synthase from Streptococcus pyogenes serotype M2 (strain MGAS10270).